The following is a 316-amino-acid chain: Glutathione synthetase (316 aa).

Residues 125-311 (KLFTAWFPEL…ITGMLMNAIE (187 aa)) form the ATP-grasp domain. Residue 151–207 (HQKHGDVIFKPLDGMGGASIFRLKKDDPNVGVIIETLTEHGNRFCMAQNFLPAIKEG) coordinates ATP. Residues Glu281 and Asn283 each coordinate Mg(2+).

It belongs to the prokaryotic GSH synthase family. The cofactor is Mg(2+). Requires Mn(2+) as cofactor.

It catalyses the reaction gamma-L-glutamyl-L-cysteine + glycine + ATP = glutathione + ADP + phosphate + H(+). It participates in sulfur metabolism; glutathione biosynthesis; glutathione from L-cysteine and L-glutamate: step 2/2. The protein is Glutathione synthetase of Photorhabdus laumondii subsp. laumondii (strain DSM 15139 / CIP 105565 / TT01) (Photorhabdus luminescens subsp. laumondii).